Reading from the N-terminus, the 208-residue chain is Uracil phosphoribosyltransferase (208 aa).

5-phospho-alpha-D-ribose 1-diphosphate contacts are provided by residues Arg-78, Arg-103, and 130 to 138 (DPMLATGGS). Uracil contacts are provided by residues Ile-193 and 198-200 (GDA). Asp-199 serves as a coordination point for 5-phospho-alpha-D-ribose 1-diphosphate.

This sequence belongs to the UPRTase family. Mg(2+) serves as cofactor.

It carries out the reaction UMP + diphosphate = 5-phospho-alpha-D-ribose 1-diphosphate + uracil. Its pathway is pyrimidine metabolism; UMP biosynthesis via salvage pathway; UMP from uracil: step 1/1. Its activity is regulated as follows. Allosterically activated by GTP. Its function is as follows. Catalyzes the conversion of uracil and 5-phospho-alpha-D-ribose 1-diphosphate (PRPP) to UMP and diphosphate. This chain is Uracil phosphoribosyltransferase, found in Shewanella halifaxensis (strain HAW-EB4).